A 183-amino-acid polypeptide reads, in one-letter code: uncharacterized protein (183 aa).

A helical membrane pass occupies residues 7-23; sequence LFFTALCFGLTGCIAPP.

The protein localises to the membrane. This is an uncharacterized protein from Haemophilus influenzae (strain ATCC 51907 / DSM 11121 / KW20 / Rd).